Consider the following 428-residue polypeptide: Histidine--tRNA ligase (428 aa).

This sequence belongs to the class-II aminoacyl-tRNA synthetase family. Homodimer.

Its subcellular location is the cytoplasm. The catalysed reaction is tRNA(His) + L-histidine + ATP = L-histidyl-tRNA(His) + AMP + diphosphate + H(+). In Lactobacillus gasseri (strain ATCC 33323 / DSM 20243 / BCRC 14619 / CIP 102991 / JCM 1131 / KCTC 3163 / NCIMB 11718 / NCTC 13722 / AM63), this protein is Histidine--tRNA ligase.